A 136-amino-acid chain; its full sequence is Large ribosomal subunit protein uL16 (136 aa).

Belongs to the universal ribosomal protein uL16 family. As to quaternary structure, part of the 50S ribosomal subunit.

Its function is as follows. Binds 23S rRNA and is also seen to make contacts with the A and possibly P site tRNAs. The polypeptide is Large ribosomal subunit protein uL16 (Erwinia tasmaniensis (strain DSM 17950 / CFBP 7177 / CIP 109463 / NCPPB 4357 / Et1/99)).